Here is a 313-residue protein sequence, read N- to C-terminus: Porphobilinogen deaminase 2 (313 aa).

Cysteine 246 is subject to S-(dipyrrolylmethanemethyl)cysteine.

The protein belongs to the HMBS family. Monomer. The cofactor is dipyrromethane.

The catalysed reaction is 4 porphobilinogen + H2O = hydroxymethylbilane + 4 NH4(+). Its pathway is porphyrin-containing compound metabolism; protoporphyrin-IX biosynthesis; coproporphyrinogen-III from 5-aminolevulinate: step 2/4. Tetrapolymerization of the monopyrrole PBG into the hydroxymethylbilane pre-uroporphyrinogen in several discrete steps. This chain is Porphobilinogen deaminase 2 (hemC2), found in Streptomyces coelicolor (strain ATCC BAA-471 / A3(2) / M145).